A 407-amino-acid chain; its full sequence is Tryptophan synthase beta chain (407 aa).

Residues 1-11 (MSTAPSQQHAS) show a composition bias toward polar residues. Residues 1 to 25 (MSTAPSQQHASAQVPDPRGRFGDFG) form a disordered region. An N6-(pyridoxal phosphate)lysine modification is found at Lys-100.

Belongs to the TrpB family. As to quaternary structure, tetramer of two alpha and two beta chains. Pyridoxal 5'-phosphate serves as cofactor.

It catalyses the reaction (1S,2R)-1-C-(indol-3-yl)glycerol 3-phosphate + L-serine = D-glyceraldehyde 3-phosphate + L-tryptophan + H2O. It functions in the pathway amino-acid biosynthesis; L-tryptophan biosynthesis; L-tryptophan from chorismate: step 5/5. Its function is as follows. The beta subunit is responsible for the synthesis of L-tryptophan from indole and L-serine. This Rhodopirellula baltica (strain DSM 10527 / NCIMB 13988 / SH1) protein is Tryptophan synthase beta chain.